A 120-amino-acid polypeptide reads, in one-letter code: Large ribosomal subunit protein P3y (120 aa).

Over residues 81–92 the composition is skewed to gly residues; the sequence is GGAAAGGGGGGE. The interval 81-120 is disordered; that stretch reads GGAAAGGGGGGEAAAATKEEEKKKEESEEEEGDFGFDLFG. A compositionally biased stretch (basic and acidic residues) spans 97–106; that stretch reads TKEEEKKKEE.

Belongs to the eukaryotic ribosomal protein P1/P2 family.

Functionally, plays an important role in the elongation step of protein synthesis. The protein is Large ribosomal subunit protein P3y (RPP3B) of Arabidopsis thaliana (Mouse-ear cress).